A 473-amino-acid chain; its full sequence is Photosystem II CP43 reaction center protein (473 aa).

Residues 1-14 constitute a propeptide that is removed on maturation; it reads MKTLYSLRRFYHVE. At Thr-15 the chain carries N-acetylthreonine. Thr-15 carries the post-translational modification Phosphothreonine. A run of 5 helical transmembrane segments spans residues 69 to 93, 134 to 155, 178 to 200, 255 to 275, and 291 to 312; these read LFEV…PHLA, LLGP…KDRN, KALY…RKIT, KPFA…LSYS, and WFNN…ASQA. Glu-367 is a [CaMn4O5] cluster binding site. The chain crosses the membrane as a helical span at residues 447-471; sequence RARAAAAGFEKGIDRDFEPVLSMTP.

It belongs to the PsbB/PsbC family. PsbC subfamily. PSII is composed of 1 copy each of membrane proteins PsbA, PsbB, PsbC, PsbD, PsbE, PsbF, PsbH, PsbI, PsbJ, PsbK, PsbL, PsbM, PsbT, PsbX, PsbY, PsbZ, Psb30/Ycf12, at least 3 peripheral proteins of the oxygen-evolving complex and a large number of cofactors. It forms dimeric complexes. Binds multiple chlorophylls and provides some of the ligands for the Ca-4Mn-5O cluster of the oxygen-evolving complex. It may also provide a ligand for a Cl- that is required for oxygen evolution. PSII binds additional chlorophylls, carotenoids and specific lipids. is required as a cofactor.

The protein resides in the plastid. The protein localises to the chloroplast thylakoid membrane. Functionally, one of the components of the core complex of photosystem II (PSII). It binds chlorophyll and helps catalyze the primary light-induced photochemical processes of PSII. PSII is a light-driven water:plastoquinone oxidoreductase, using light energy to abstract electrons from H(2)O, generating O(2) and a proton gradient subsequently used for ATP formation. This is Photosystem II CP43 reaction center protein from Crucihimalaya wallichii (Rock-cress).